Here is a 341-residue protein sequence, read N- to C-terminus: MIDIGIVGGSGYTGGELLRLLSVHPSANVVCVTSRKLAGKPVTSVHQHLRGLLDLRFEAPSPAEIAQRCDVVFTAVPHGTAMDWVPELLDNGAKVIDLSADYRLPVDVFEKTYGIKHRAPRDAVFGLPELHPEVAGASLVGNPGCYPTGATLAIAPLAKAGMVDRVVFDSKSGISGAGAEPTETSHYPNLAENIRCYRVTNHRHVPEIKQELSRLQNDIRISFTPHVIPAVRGILTTAHVFVKDSFQDTIQDREFISKLYSDFYRNAKFVRLVEGVPMLGNVRCSNFCDIGFEIEKNSDRIVVISAIDNLVKGASGQAIQNMNLMMGLDETAGLWFPGGAP.

C145 is a catalytic residue.

Belongs to the NAGSA dehydrogenase family. Type 1 subfamily.

It is found in the cytoplasm. It catalyses the reaction N-acetyl-L-glutamate 5-semialdehyde + phosphate + NADP(+) = N-acetyl-L-glutamyl 5-phosphate + NADPH + H(+). The protein operates within amino-acid biosynthesis; L-arginine biosynthesis; N(2)-acetyl-L-ornithine from L-glutamate: step 3/4. Its function is as follows. Catalyzes the NADPH-dependent reduction of N-acetyl-5-glutamyl phosphate to yield N-acetyl-L-glutamate 5-semialdehyde. The polypeptide is N-acetyl-gamma-glutamyl-phosphate reductase (Methanothrix thermoacetophila (strain DSM 6194 / JCM 14653 / NBRC 101360 / PT) (Methanosaeta thermophila)).